We begin with the raw amino-acid sequence, 203 residues long: Small ribosomal subunit protein uS4 (203 aa).

Residues 93 to 154 (RRLDNVVFRA…KSRNMDAVTD (62 aa)) enclose the S4 RNA-binding domain.

It belongs to the universal ribosomal protein uS4 family. Part of the 30S ribosomal subunit. Contacts protein S5. The interaction surface between S4 and S5 is involved in control of translational fidelity.

Its function is as follows. One of the primary rRNA binding proteins, it binds directly to 16S rRNA where it nucleates assembly of the body of the 30S subunit. With S5 and S12 plays an important role in translational accuracy. The protein is Small ribosomal subunit protein uS4 of Chlorobium luteolum (strain DSM 273 / BCRC 81028 / 2530) (Pelodictyon luteolum).